The sequence spans 135 residues: ATP synthase epsilon chain, chloroplastic (135 aa).

Belongs to the ATPase epsilon chain family. As to quaternary structure, F-type ATPases have 2 components, CF(1) - the catalytic core - and CF(0) - the membrane proton channel. CF(1) has five subunits: alpha(3), beta(3), gamma(1), delta(1), epsilon(1). CF(0) has three main subunits: a, b and c.

The protein resides in the plastid. The protein localises to the chloroplast thylakoid membrane. Functionally, produces ATP from ADP in the presence of a proton gradient across the membrane. This is ATP synthase epsilon chain, chloroplastic from Marchantia polymorpha (Common liverwort).